The following is a 145-amino-acid chain: Small ribosomal subunit protein eS19 (145 aa).

It belongs to the eukaryotic ribosomal protein eS19 family. In terms of assembly, component of the small ribosomal subunit.

The protein resides in the cytoplasm. The protein localises to the nucleus. Its function is as follows. Component of the small ribosomal subunit. The ribosome is a large ribonucleoprotein complex responsible for the synthesis of proteins in the cell. Required for pre-rRNA processing and maturation of 40S ribosomal subunits. The sequence is that of Small ribosomal subunit protein eS19 (rps19) from Myxine glutinosa (Atlantic hagfish).